The sequence spans 127 residues: Major sperm protein 55/57 (127 aa).

Alanine 2 carries the post-translational modification N-acetylalanine. The region spanning aspartate 9 to asparagine 126 is the MSP domain.

As to expression, sperm.

It is found in the cell projection. The protein localises to the pseudopodium. Its subcellular location is the cytoplasm. It localises to the cytoskeleton. Its function is as follows. Central component in molecular interactions underlying sperm crawling. Forms an extensive filament system that extends from sperm villipoda, along the leading edge of the pseudopod. In Caenorhabditis elegans, this protein is Major sperm protein 55/57 (msp-55).